Here is a 539-residue protein sequence, read N- to C-terminus: 2,3-dihydroxybenzoate-AMP ligase (539 aa).

G191 contacts ATP. Substrate contacts are provided by residues 234-235 and S240; that span reads HN. 5 residues coordinate ATP: G307, V329, D413, R428, and K519. K519 contributes to the substrate binding site.

This sequence belongs to the ATP-dependent AMP-binding enzyme family.

Its subcellular location is the cytoplasm. The catalysed reaction is 2,3-dihydroxybenzoate + holo-[ACP] + ATP = 2,3-dihydroxybenzoyl-[ACP] + AMP + diphosphate. It participates in siderophore biosynthesis; bacillibactin biosynthesis. Functionally, involved in the biosynthesis of the catecholic siderophore bacillibactin. Catalyzes the activation of the carboxylate group of 2,3-dihydroxy-benzoate (DHB), via ATP-dependent PPi exchange reactions, to the acyladenylate. This Bacillus subtilis (strain 168) protein is 2,3-dihydroxybenzoate-AMP ligase.